We begin with the raw amino-acid sequence, 535 residues long: Pyrichalasin C-18 hydroxylase (535 aa).

The chain crosses the membrane as a helical span at residues Leu42–Leu62. N-linked (GlcNAc...) asparagine glycosylation is found at Asn139 and Asn222. Position 479 (Cys479) interacts with heme.

This sequence belongs to the cytochrome P450 family. The cofactor is heme.

It is found in the membrane. Its pathway is mycotoxin biosynthesis. In terms of biological role, cytochrome P450 monooxygenase; part of the gene cluster that mediates the biosynthesis of the mycotoxin pyrichalasin H, a tyrosine-derived cytochalasan that inhibits the growth of rice seedlings, but also inhibits lymphocyte capping and actin polymerization and alters cell morphology. Pyrichalasin H is indicated as the responsible agent for the genus-specific pathogenicity of M.grisea toward crabgrass. The first step in the pathway is catalyzed by the O-methyltransferase pyiA which methylates free tyrosine to generate the precursor O-methyltyrosine. The hybrid PKS-NRPS pyiS, assisted by the enoyl reductase pyiC, are responsible for fusion of the O-methyltyrosine precursor and the polyketide backbone. The polyketide synthase module (PKS) of pyiS is responsible for the synthesis of the polyketide backbone and the downstream nonribosomal peptide synthetase (NRPS) amidates the carboxyl end of the polyketide with the O-methyltyrosine precursor. As the NRPS A-domain demonstrates substrate tolerance, pyiS can also use phenylalanine, tyrosine and even para-chlorophenylalanine as amino acid precursor, which leads to the production of novel cytochalasans, including halogenated cytochalasans. Because pyiS lacks a designated enoylreductase (ER) domain, the required activity is provided the enoyl reductase pyiC. Reduction by the hydrolyase pyiE leads to 1,5-dihydropyrrolone, which is substrate for dehydration and intra-molecular Diels-Alder cyclization by the Diels-Alderase pyiF to yield the required isoindolone-fused macrocycle. The tailoring cytochrome P450 monooxygenases piyD and piyG catalyze the hydroxylation at C-18 and C-7, respectivily, whereas the short-chain dehydrogenase/reductase pyiH reduces the carbonyl at C-21 in preparation for the transfer of an acetyl group by the acetyltransferase pyiB. These 3 reactions whose order is not clear yet, lead to the production of O-methylpyrichalasin J, a deacetylated pyrichalasin H. Finally, pyiB to converts O-methylpyrichalasin J into the final product pyrichalasin H via acetylation of C-21. This chain is Pyrichalasin C-18 hydroxylase, found in Pyricularia grisea (Crabgrass-specific blast fungus).